Consider the following 201-residue polypeptide: Small ribosomal subunit protein uS4c (201 aa).

The S4 RNA-binding domain maps to 89-149 (MRLDNILFRL…DEQKSRALIQ (61 aa)).

The protein belongs to the universal ribosomal protein uS4 family. Part of the 30S ribosomal subunit. Contacts protein S5. The interaction surface between S4 and S5 is involved in control of translational fidelity.

It is found in the plastid. Its subcellular location is the chloroplast. Its function is as follows. One of the primary rRNA binding proteins, it binds directly to 16S rRNA where it nucleates assembly of the body of the 30S subunit. With S5 and S12 plays an important role in translational accuracy. The polypeptide is Small ribosomal subunit protein uS4c (rps4) (Coffea arabica (Arabian coffee)).